A 98-amino-acid polypeptide reads, in one-letter code: MYTNSHDIIRKPVITEKSMAEMADKKYTFIVDPHANKVQIKKAIEEVFGVKVEKVNTSNILGKTKRVGVHVGKRADYKKAIVKLTEDSKAIEFFEGMQ.

The protein belongs to the universal ribosomal protein uL23 family. Part of the 50S ribosomal subunit. Contacts protein L29, and trigger factor when it is bound to the ribosome.

One of the early assembly proteins it binds 23S rRNA. One of the proteins that surrounds the polypeptide exit tunnel on the outside of the ribosome. Forms the main docking site for trigger factor binding to the ribosome. In Clostridium acetobutylicum (strain ATCC 824 / DSM 792 / JCM 1419 / IAM 19013 / LMG 5710 / NBRC 13948 / NRRL B-527 / VKM B-1787 / 2291 / W), this protein is Large ribosomal subunit protein uL23.